Reading from the N-terminus, the 54-residue chain is UPF0391 membrane protein Reut_A0124 (54 aa).

The next 2 membrane-spanning stretches (helical) occupy residues 5-25 (ALVFFVIALIAAVFGFGGIAA) and 30-50 (IAKILFFIFLIVALVTAVMGL).

The protein belongs to the UPF0391 family.

The protein localises to the cell membrane. In Cupriavidus pinatubonensis (strain JMP 134 / LMG 1197) (Cupriavidus necator (strain JMP 134)), this protein is UPF0391 membrane protein Reut_A0124.